We begin with the raw amino-acid sequence, 323 residues long: Germacrene A synthase (323 aa).

Mg(2+)-binding residues include D82, D86, N222, S226, and E230. The DDXXD motif signature appears at 82 to 86 (DDQCD).

This sequence belongs to the terpene synthase family. Mg(2+) serves as cofactor.

The enzyme catalyses (2E,6E)-farnesyl diphosphate = 5-epi-alpha-selinene + diphosphate. In terms of biological role, catalyzes the cyclization of farnesyl diphosphate (FPP) to the sesquiterpene germacrene A. The sequence is that of Germacrene A synthase from Nostoc punctiforme (strain ATCC 29133 / PCC 73102).